The following is a 304-amino-acid chain: MTNKVVILGSTNVDQFLTVERYAQPGETLHVEEAQKAFGGGKGANQAIATARMQADTTFITKIGTDGVADFILEDFKVAHIDTSYIIKTAEAKTGQAFITVNAEGQNTIYVYGGANMTMTPEDVINAKDAIINADFVVAQLEVPIPAIISAFEIAKAHGVTTVLNPAPAKALPNELLSLIDIIVPNETEAELLSGIKVTNEQSMKDNANYFLSIGIKTVLITLGKQGTYFATKNQSQHIEAYKVNAIDTTAAGDTFIGAFVSRLNKSQDNLADAIDFGNKASSLTVQKHGAQASIPLLEEVNQV.

Substrate is bound by residues asparagine 12–aspartate 14, glycine 41–asparagine 45, and glutamate 142. ATP-binding positions include asparagine 186 and threonine 222–glycine 227. K(+) is bound by residues aspartate 248 and threonine 250. Residues glycine 253–aspartate 254 and asparagine 279 each bind ATP. Aspartate 254 serves as a coordination point for substrate. The active-site Proton acceptor is aspartate 254. K(+) contacts are provided by threonine 285, lysine 288, glycine 290, and serine 294.

Belongs to the carbohydrate kinase PfkB family. Ribokinase subfamily. Homodimer. Mg(2+) serves as cofactor.

It is found in the cytoplasm. It carries out the reaction D-ribose + ATP = D-ribose 5-phosphate + ADP + H(+). It participates in carbohydrate metabolism; D-ribose degradation; D-ribose 5-phosphate from beta-D-ribopyranose: step 2/2. Its activity is regulated as follows. Activated by a monovalent cation that binds near, but not in, the active site. The most likely occupant of the site in vivo is potassium. Ion binding induces a conformational change that may alter substrate affinity. Catalyzes the phosphorylation of ribose at O-5 in a reaction requiring ATP and magnesium. The resulting D-ribose-5-phosphate can then be used either for sythesis of nucleotides, histidine, and tryptophan, or as a component of the pentose phosphate pathway. This chain is Ribokinase, found in Staphylococcus aureus (strain COL).